A 260-amino-acid polypeptide reads, in one-letter code: Adenosylcobinamide-GDP ribazoletransferase (260 aa).

7 consecutive transmembrane segments (helical) span residues 42 to 62 (PLAG…ANAI), 64 to 84 (LPPL…TGAL), 117 to 137 (FAAL…MAII), 144 to 164 (YALL…LAFW), 192 to 212 (GLGL…VALI), 214 to 234 (ALVL…AKIG), and 240 to 260 (TLGA…VMAL).

Belongs to the CobS family. The cofactor is Mg(2+).

It is found in the cell inner membrane. The enzyme catalyses alpha-ribazole + adenosylcob(III)inamide-GDP = adenosylcob(III)alamin + GMP + H(+). The catalysed reaction is alpha-ribazole 5'-phosphate + adenosylcob(III)inamide-GDP = adenosylcob(III)alamin 5'-phosphate + GMP + H(+). The protein operates within cofactor biosynthesis; adenosylcobalamin biosynthesis; adenosylcobalamin from cob(II)yrinate a,c-diamide: step 7/7. Joins adenosylcobinamide-GDP and alpha-ribazole to generate adenosylcobalamin (Ado-cobalamin). Also synthesizes adenosylcobalamin 5'-phosphate from adenosylcobinamide-GDP and alpha-ribazole 5'-phosphate. The polypeptide is Adenosylcobinamide-GDP ribazoletransferase (Brucella abortus (strain S19)).